Here is a 122-residue protein sequence, read N- to C-terminus: Large ribosomal subunit protein uL14 (122 aa).

Belongs to the universal ribosomal protein uL14 family. As to quaternary structure, part of the 50S ribosomal subunit. Forms a cluster with proteins L3 and L19. In the 70S ribosome, L14 and L19 interact and together make contacts with the 16S rRNA in bridges B5 and B8.

Binds to 23S rRNA. Forms part of two intersubunit bridges in the 70S ribosome. In Caulobacter vibrioides (strain ATCC 19089 / CIP 103742 / CB 15) (Caulobacter crescentus), this protein is Large ribosomal subunit protein uL14.